Reading from the N-terminus, the 347-residue chain is MDENKKRALAAALGQIEKQFGKGAVMRMGDHDRQAIPSISTGSLGLDIALGIGGLPKGRIVEIYGPESSGKTTLTLSVIAAAQRMGSTCAFVDAEHALDPDYAGKLGVNVDDLLVSQPDTGEQALEITDMLVRSNAVDVIIVDSVAALVPKAEIEGEMGDAHVGLQARLMSQALRKITGNIKNANCLVIFINQIRMKIGVMFGSPETTTGGNALKFYASVRLDIRRTGAVKEGDEVVGSETRVKVVKNKVAPPFRQAEFQILYDQAFYRNGEIIDLGVQQGLVEKSGAWYAYKGSKIGQGKANAAKYLEENPEIGQEIEQQIRAKLLVTSANTKATPVAEDLADADI.

65–72 contacts ATP; sequence GPESSGKT.

This sequence belongs to the RecA family.

It is found in the cytoplasm. In terms of biological role, can catalyze the hydrolysis of ATP in the presence of single-stranded DNA, the ATP-dependent uptake of single-stranded DNA by duplex DNA, and the ATP-dependent hybridization of homologous single-stranded DNAs. It interacts with LexA causing its activation and leading to its autocatalytic cleavage. The polypeptide is Protein RecA (Stutzerimonas stutzeri (Pseudomonas stutzeri)).